Consider the following 331-residue polypeptide: Ferredoxin--NADP reductase 2 (331 aa).

FAD contacts are provided by Glu37, Gln45, Tyr50, Val90, Phe124, Asp286, and Thr327.

This sequence belongs to the ferredoxin--NADP reductase type 2 family. As to quaternary structure, homodimer. FAD is required as a cofactor.

The enzyme catalyses 2 reduced [2Fe-2S]-[ferredoxin] + NADP(+) + H(+) = 2 oxidized [2Fe-2S]-[ferredoxin] + NADPH. In Listeria monocytogenes serovar 1/2a (strain ATCC BAA-679 / EGD-e), this protein is Ferredoxin--NADP reductase 2.